The sequence spans 756 residues: 5-methyltetrahydropteroyltriglutamate--homocysteine methyltransferase (756 aa).

Residues 16 to 19 (RELK) and Lys112 each bind 5-methyltetrahydropteroyltri-L-glutamate. L-homocysteine is bound by residues 432 to 434 (IGS) and Glu485. Residues 432–434 (IGS) and Glu485 each bind L-methionine. Residues 516 to 517 (RC) and Trp562 contribute to the 5-methyltetrahydropteroyltri-L-glutamate site. L-homocysteine is bound at residue Asp600. Asp600 serves as a coordination point for L-methionine. Glu606 is a 5-methyltetrahydropteroyltri-L-glutamate binding site. Zn(2+) is bound by residues His642, Cys644, and Glu666. The active-site Proton donor is the His695. Residue Cys727 coordinates Zn(2+).

It belongs to the vitamin-B12 independent methionine synthase family. Zn(2+) serves as cofactor.

The catalysed reaction is 5-methyltetrahydropteroyltri-L-glutamate + L-homocysteine = tetrahydropteroyltri-L-glutamate + L-methionine. It participates in amino-acid biosynthesis; L-methionine biosynthesis via de novo pathway; L-methionine from L-homocysteine (MetE route): step 1/1. Catalyzes the transfer of a methyl group from 5-methyltetrahydrofolate to homocysteine resulting in methionine formation. This Haemophilus influenzae (strain PittGG) protein is 5-methyltetrahydropteroyltriglutamate--homocysteine methyltransferase.